The sequence spans 197 residues: Small ribosomal subunit protein uS4 (197 aa).

Positions 87-147 (SRIDNVIFRL…ESKKNTQRMK (61 aa)) constitute an S4 RNA-binding domain.

Belongs to the universal ribosomal protein uS4 family. As to quaternary structure, part of the 30S ribosomal subunit. Contacts protein S5. The interaction surface between S4 and S5 is involved in control of translational fidelity.

One of the primary rRNA binding proteins, it binds directly to 16S rRNA where it nucleates assembly of the body of the 30S subunit. In terms of biological role, with S5 and S12 plays an important role in translational accuracy. The chain is Small ribosomal subunit protein uS4 from Agathobacter rectalis (strain ATCC 33656 / DSM 3377 / JCM 17463 / KCTC 5835 / VPI 0990) (Eubacterium rectale).